Here is a 146-residue protein sequence, read N- to C-terminus: Large ribosomal subunit protein bL21 (146 aa).

Residues 95–104 (PKKKTRRKMG) show a composition bias toward basic residues. Residues 95 to 146 (PKKKTRRKMGHRQELTRVMVKSISISKSTPKSSPKTEATKKSTSSKASKPEN) form a disordered region. Over residues 115 to 146 (KSISISKSTPKSSPKTEATKKSTSSKASKPEN) the composition is skewed to low complexity.

This sequence belongs to the bacterial ribosomal protein bL21 family. In terms of assembly, part of the 50S ribosomal subunit. Contacts protein L20.

Functionally, this protein binds to 23S rRNA in the presence of protein L20. The protein is Large ribosomal subunit protein bL21 of Prochlorococcus marinus (strain MIT 9515).